The primary structure comprises 279 residues: Proteasome subunit beta (279 aa).

A propeptide spans 1 to 53 (removed in mature form; by autocatalysis); sequence MSGTAEFPGRIPAPYLEVGSSSFVELLGSVAPELLPGRRPLPPGDMGDAAPHG. Threonine 54 functions as the Nucleophile in the catalytic mechanism.

It belongs to the peptidase T1B family. As to quaternary structure, the 20S proteasome core is composed of 14 alpha and 14 beta subunits that assemble into four stacked heptameric rings, resulting in a barrel-shaped structure. The two inner rings, each composed of seven catalytic beta subunits, are sandwiched by two outer rings, each composed of seven alpha subunits. The catalytic chamber with the active sites is on the inside of the barrel. Has a gated structure, the ends of the cylinder being occluded by the N-termini of the alpha-subunits. Is capped by the proteasome-associated ATPase, ARC.

The protein resides in the cytoplasm. It carries out the reaction Cleavage of peptide bonds with very broad specificity.. It participates in protein degradation; proteasomal Pup-dependent pathway. Its activity is regulated as follows. The formation of the proteasomal ATPase ARC-20S proteasome complex, likely via the docking of the C-termini of ARC into the intersubunit pockets in the alpha-rings, may trigger opening of the gate for substrate entry. Interconversion between the open-gate and close-gate conformations leads to a dynamic regulation of the 20S proteasome proteolysis activity. Component of the proteasome core, a large protease complex with broad specificity involved in protein degradation. The sequence is that of Proteasome subunit beta from Stackebrandtia nassauensis (strain DSM 44728 / CIP 108903 / NRRL B-16338 / NBRC 102104 / LLR-40K-21).